We begin with the raw amino-acid sequence, 320 residues long: Lipoyl synthase (320 aa).

The interval 1 to 28 (MVTVVDRVTDRRLRHPEKAHRPDTSVQK) is disordered. A compositionally biased stretch (basic and acidic residues) spans 19-28 (AHRPDTSVQK). Positions 59, 64, 70, 85, 89, 92, and 298 each coordinate [4Fe-4S] cluster. In terms of domain architecture, Radical SAM core spans 71–287 (WSQRHASFMI…AKIGKVKGFL (217 aa)).

Belongs to the radical SAM superfamily. Lipoyl synthase family. The cofactor is [4Fe-4S] cluster.

The protein resides in the cytoplasm. It carries out the reaction [[Fe-S] cluster scaffold protein carrying a second [4Fe-4S](2+) cluster] + N(6)-octanoyl-L-lysyl-[protein] + 2 oxidized [2Fe-2S]-[ferredoxin] + 2 S-adenosyl-L-methionine + 4 H(+) = [[Fe-S] cluster scaffold protein] + N(6)-[(R)-dihydrolipoyl]-L-lysyl-[protein] + 4 Fe(3+) + 2 hydrogen sulfide + 2 5'-deoxyadenosine + 2 L-methionine + 2 reduced [2Fe-2S]-[ferredoxin]. The protein operates within protein modification; protein lipoylation via endogenous pathway; protein N(6)-(lipoyl)lysine from octanoyl-[acyl-carrier-protein]: step 2/2. Its function is as follows. Catalyzes the radical-mediated insertion of two sulfur atoms into the C-6 and C-8 positions of the octanoyl moiety bound to the lipoyl domains of lipoate-dependent enzymes, thereby converting the octanoylated domains into lipoylated derivatives. The sequence is that of Lipoyl synthase from Bartonella henselae (strain ATCC 49882 / DSM 28221 / CCUG 30454 / Houston 1) (Rochalimaea henselae).